The following is a 204-amino-acid chain: Cardiotrophin-2 (204 aa).

Residues 1 to 22 (MYCLLATPLCLLSLLLPPLSPA) form the signal peptide. Asparagine 44 carries an N-linked (GlcNAc...) asparagine glycan.

The protein belongs to the IL-6 superfamily. Binds to tripartite CNTF receptor complex consisting of CNTF alpha chain, LIFR and IL6ST (in vitro). In terms of tissue distribution, not detected in adult tissues.

The protein resides in the secreted. Its function is as follows. Increases the platelet count associated with splenomegaly. May have an important role in neuronal precursor development and maturation. This Mus musculus (Mouse) protein is Cardiotrophin-2 (Ctf2).